The following is a 561-amino-acid chain: MRLWKSMAWGILLWHSQSGALCPAWPPARAAEEITRLQQQLADWNDIYWKQGVSAVDDSVYDQLSARLVQWQRCVGQDVSSTPVSPPLNGTTMHPVAHTGVRKLADRQAVEQWVRGRSELWVQPKVDGVAVTLVYQNGKLTRAISRGNGLQGEDWTPKIRLIPSIPQTTQGALANAVLQGEIFLQREGHIQQRMGGMNARSKAAGMLMRQDNASALNSLGIFIWAWPDGPANMPERLSQLAKAGFSLTKKYSLAVKDASEVERARQSWLTSALPFVTDGVVIRMAKEPASQYWRPGQGDWLAAWKYPPVAQVAQVSAIQFSVGKSGKITVVASLVPVILDDKRVQRVNIGSVKRWEAWDIAPGDQILVSLAGQGIPRLDEVVWRSRERSKPVPPGSHFNSLTCFYASATCQEQFISRLVWLGSRSALGLDGMGEASWRALHQTHRFEHIFSWLALTSAQIANTPGVAKGKSEQIWRQFYLARRQSFTRWIMAMDIPLTQAALQASGDRSWEQLLMRTEQHWRQLPATGERRAGRVIDWRNNPQINALSRWLAAQHIPGFGS.

Lys125 acts as the N6-AMP-lysine intermediate in catalysis.

Belongs to the NAD-dependent DNA ligase family. LigB subfamily.

The catalysed reaction is NAD(+) + (deoxyribonucleotide)n-3'-hydroxyl + 5'-phospho-(deoxyribonucleotide)m = (deoxyribonucleotide)n+m + AMP + beta-nicotinamide D-nucleotide.. In terms of biological role, catalyzes the formation of phosphodiester linkages between 5'-phosphoryl and 3'-hydroxyl groups in double-stranded DNA using NAD as a coenzyme and as the energy source for the reaction. This Salmonella paratyphi A (strain AKU_12601) protein is DNA ligase B.